The chain runs to 304 residues: Acetaldehyde dehydrogenase 4 (304 aa).

The active-site Acyl-thioester intermediate is the Cys-131. Residues 162–170 and Asn-273 each bind NAD(+); that span reads SAGPGTRKN.

The protein belongs to the acetaldehyde dehydrogenase family.

It carries out the reaction acetaldehyde + NAD(+) + CoA = acetyl-CoA + NADH + H(+). The chain is Acetaldehyde dehydrogenase 4 from Dechloromonas aromatica (strain RCB).